The primary structure comprises 258 residues: Phosphate import ATP-binding protein PstB (258 aa).

The ABC transporter domain maps to 5-247 (LDLKGVNIYY…EKIFSNPTEK (243 aa)). Residue 37 to 44 (GASGCGKT) participates in ATP binding.

It belongs to the ABC transporter superfamily. Phosphate importer (TC 3.A.1.7) family. In terms of assembly, the complex is composed of two ATP-binding proteins (PstB), two transmembrane proteins (PstC and PstA) and a solute-binding protein (PstS).

The protein resides in the cell membrane. The catalysed reaction is phosphate(out) + ATP + H2O = ADP + 2 phosphate(in) + H(+). Part of the ABC transporter complex PstSACB involved in phosphate import. Responsible for energy coupling to the transport system. The polypeptide is Phosphate import ATP-binding protein PstB (Mycobacterium leprae (strain TN)).